The chain runs to 197 residues: Beta-crystallin A2 (197 aa).

Residues 1-11 form an N-terminal arm region; sequence MSGTLSQGSSP. 2 consecutive Beta/gamma crystallin 'Greek key' domains span residues 12–52 and 53–99; these read ARLT…KVES and GAWV…RPLL. The segment at 100-105 is connecting peptide; it reads CANHSD. 2 consecutive Beta/gamma crystallin 'Greek key' domains span residues 106–147 and 148–196; these read SRVT…KVTS and GAWV…RRVQ.

This sequence belongs to the beta/gamma-crystallin family. As to quaternary structure, homo/heterodimer, or complexes of higher-order. The structure of beta-crystallin oligomers seems to be stabilized through interactions between the N-terminal arms.

Crystallins are the dominant structural components of the vertebrate eye lens. This Macropus fuliginosus (Western gray kangaroo) protein is Beta-crystallin A2 (CRYBA2).